Consider the following 279-residue polypeptide: HTH-type transcriptional activator RhaS (279 aa).

In terms of domain architecture, HTH araC/xylS-type spans Gln175–Gln273. 2 consecutive DNA-binding regions (H-T-H motif) follow at residues Gly192–Thr213 and Ile240–Phe263.

In terms of assembly, binds DNA as a dimer.

It is found in the cytoplasm. In terms of biological role, activates expression of the rhaBAD and rhaT operons. In Pectobacterium atrosepticum (strain SCRI 1043 / ATCC BAA-672) (Erwinia carotovora subsp. atroseptica), this protein is HTH-type transcriptional activator RhaS.